The primary structure comprises 127 residues: Transcription antitermination protein NusB (127 aa).

It belongs to the NusB family.

Involved in transcription antitermination. Required for transcription of ribosomal RNA (rRNA) genes. Binds specifically to the boxA antiterminator sequence of the ribosomal RNA (rrn) operons. The chain is Transcription antitermination protein NusB from Lysinibacillus sphaericus (strain C3-41).